The primary structure comprises 166 residues: 6,7-dimethyl-8-ribityllumazine synthase (166 aa).

5-amino-6-(D-ribitylamino)uracil is bound by residues Trp-31, 63–65 (SFE), and 85–87 (VII). Residue 90-91 (GT) participates in (2S)-2-hydroxy-3-oxobutyl phosphate binding. Catalysis depends on His-93, which acts as the Proton donor. Phe-118 contacts 5-amino-6-(D-ribitylamino)uracil. Residue Arg-132 participates in (2S)-2-hydroxy-3-oxobutyl phosphate binding.

Belongs to the DMRL synthase family.

It catalyses the reaction (2S)-2-hydroxy-3-oxobutyl phosphate + 5-amino-6-(D-ribitylamino)uracil = 6,7-dimethyl-8-(1-D-ribityl)lumazine + phosphate + 2 H2O + H(+). It participates in cofactor biosynthesis; riboflavin biosynthesis; riboflavin from 2-hydroxy-3-oxobutyl phosphate and 5-amino-6-(D-ribitylamino)uracil: step 1/2. Catalyzes the formation of 6,7-dimethyl-8-ribityllumazine by condensation of 5-amino-6-(D-ribitylamino)uracil with 3,4-dihydroxy-2-butanone 4-phosphate. This is the penultimate step in the biosynthesis of riboflavin. The polypeptide is 6,7-dimethyl-8-ribityllumazine synthase (Cutibacterium acnes (strain DSM 16379 / KPA171202) (Propionibacterium acnes)).